Reading from the N-terminus, the 385-residue chain is Chaperone protein DnaJ (385 aa).

A J domain is found at 5 to 70 (DYYEVLGVAK…QKRAAYDRFG (66 aa)). Residues 141-219 (GKTETIRIPT…CSGAGRVNRE (79 aa)) form a CR-type zinc finger. Residues Cys154, Cys157, Cys171, Cys174, Cys193, Cys196, Cys207, and Cys210 each contribute to the Zn(2+) site. CXXCXGXG motif repeat units lie at residues 154-161 (CETCSGTG), 171-178 (CSTCGGYG), 193-200 (CPNCHGRG), and 207-214 (CTACSGAG).

This sequence belongs to the DnaJ family. As to quaternary structure, homodimer. Zn(2+) is required as a cofactor.

It is found in the cytoplasm. Participates actively in the response to hyperosmotic and heat shock by preventing the aggregation of stress-denatured proteins and by disaggregating proteins, also in an autonomous, DnaK-independent fashion. Unfolded proteins bind initially to DnaJ; upon interaction with the DnaJ-bound protein, DnaK hydrolyzes its bound ATP, resulting in the formation of a stable complex. GrpE releases ADP from DnaK; ATP binding to DnaK triggers the release of the substrate protein, thus completing the reaction cycle. Several rounds of ATP-dependent interactions between DnaJ, DnaK and GrpE are required for fully efficient folding. Also involved, together with DnaK and GrpE, in the DNA replication of plasmids through activation of initiation proteins. The sequence is that of Chaperone protein DnaJ from Methylorubrum extorquens (strain PA1) (Methylobacterium extorquens).